A 329-amino-acid chain; its full sequence is Biotin synthase (329 aa).

In terms of domain architecture, Radical SAM core spans 38–262 (NTIQVSTLLS…IMPHSYIRLS (225 aa)). The [4Fe-4S] cluster site is built by Cys53, Cys57, and Cys60. Positions 97, 128, 188, and 260 each coordinate [2Fe-2S] cluster.

Belongs to the radical SAM superfamily. Biotin synthase family. Homodimer. [4Fe-4S] cluster serves as cofactor. The cofactor is [2Fe-2S] cluster.

The catalysed reaction is (4R,5S)-dethiobiotin + (sulfur carrier)-SH + 2 reduced [2Fe-2S]-[ferredoxin] + 2 S-adenosyl-L-methionine = (sulfur carrier)-H + biotin + 2 5'-deoxyadenosine + 2 L-methionine + 2 oxidized [2Fe-2S]-[ferredoxin]. Its pathway is cofactor biosynthesis; biotin biosynthesis; biotin from 7,8-diaminononanoate: step 2/2. In terms of biological role, catalyzes the conversion of dethiobiotin (DTB) to biotin by the insertion of a sulfur atom into dethiobiotin via a radical-based mechanism. This is Biotin synthase from Acinetobacter baumannii (strain SDF).